A 1148-amino-acid polypeptide reads, in one-letter code: Protocadherin-19 (1148 aa).

The signal sequence occupies residues 1-21 (MESLLLPVLLLLAILWTQAAA). Cadherin domains follow at residues 22 to 129 (LINL…APSF), 130 to 238 (PAAQ…NPVF), 239 to 346 (SEST…PPVI), 350 to 453 (SVNS…HPHF), 454 to 563 (SKPY…TPVI), and 569 to 672 (INGT…QESM). The Extracellular segment spans residues 22 to 678 (LINLKYSVEE…QESMGSVNLS (657 aa)). Ca(2+)-binding residues include Glu31, Glu32, Asp88, and Asp90. An intrachain disulfide couples Cys93 to Cys99. Ca(2+) is bound by residues Asp121, Asn123, Asp124, Asn125, Glu140, Asp155, Asp157, Glu199, Asp212, Asp230, Ser231, Asn232, Asp233, Asn234, and Glu249. N-linked (GlcNAc...) asparagine glycosylation is present at Asn261. The Ca(2+) site is built by Asp264, Asp266, Asn270, Asp305, Glu307, Asp338, Asn340, Asp341, Asn342, Glu360, Asp375, Asp377, Asn381, Asp412, and Glu414. An N-linked (GlcNAc...) asparagine glycan is attached at Asn420. Positions 427, 445, 446, 447, 448, 449, 464, 479, 481, 485, 522, 524, and 537 each coordinate Ca(2+). A glycan (N-linked (GlcNAc...) asparagine) is linked at Asn485. The N-linked (GlcNAc...) asparagine glycan is linked to Asn546. Asp555, Val556, Asn557, Asp558, and Asn559 together coordinate Ca(2+). Asn570 carries N-linked (GlcNAc...) asparagine glycosylation. Ca(2+) contacts are provided by Asp594, Asp596, Asn600, and Asp646. Asn676 carries an N-linked (GlcNAc...) asparagine glycan. The chain crosses the membrane as a helical span at residues 679 to 699 (LIFIIALGSIAGILFVTMIFV). The Cytoplasmic portion of the chain corresponds to 700–1148 (AIKCKRDNKE…GVKRLKDIVL (449 aa)). Disordered regions lie at residues 901 to 921 (GNSLKDSGHEESDQTDSEHDV) and 1100 to 1148 (NVNN…DIVL). Composition is skewed to basic and acidic residues over residues 906 to 921 (DSGHEESDQTDSEHDV), 1109 to 1123 (SEAEPRGADSEKVMH), and 1130 to 1148 (KEGRNKESPGVKRLKDIVL).

In terms of assembly, homodimer; antiparallel. Moderately expressed in all regions of the brain examined, with lowest levels found in the cerebellum. Moderate expression is also found in ovary, and low expression in all other tissues tested. Also detected in primary skin fibroblast.

The protein localises to the cell membrane. Functionally, calcium-dependent cell-adhesion protein. The sequence is that of Protocadherin-19 (PCDH19) from Homo sapiens (Human).